Here is a 225-residue protein sequence, read N- to C-terminus: Large ribosomal subunit protein uL4 (225 aa).

The segment at 46-102 is disordered; it reads KRQGTHATKGRGEVRGGGRKPFRQKGTGRARQGSIRAPHFTGGGTVHGPQPRDYSQR. Residues 62-73 are compositionally biased toward basic residues; that stretch reads GGRKPFRQKGTG.

This sequence belongs to the universal ribosomal protein uL4 family. Part of the 50S ribosomal subunit.

Functionally, one of the primary rRNA binding proteins, this protein initially binds near the 5'-end of the 23S rRNA. It is important during the early stages of 50S assembly. It makes multiple contacts with different domains of the 23S rRNA in the assembled 50S subunit and ribosome. Forms part of the polypeptide exit tunnel. This Corynebacterium urealyticum (strain ATCC 43042 / DSM 7109) protein is Large ribosomal subunit protein uL4.